The following is a 161-amino-acid chain: Anaerobic nitrite reductase Glb1-1 (161 aa).

The 150-residue stretch at 8-157 (CFTEEQEALV…LVGAIKSEMK (150 aa)) folds into the Globin domain. Residues 41-45 (EIAPS) carry the Homodimerization motif. 6 residues coordinate heme b: S51, K65, H69, K99, T103, and H104. The Homodimerization signature appears at 111–123 (NEHFEVTKFALLD).

This sequence belongs to the plant globin family. In terms of assembly, homodimer. It depends on heme b as a cofactor. As to expression, mainly expressed in root nodules, and, to a lower extent, in leaves, roots, stems, flowers and fruits. Accumulates in mature root nodules.

It carries out the reaction Fe(III)-heme b-[protein] + nitric oxide + H2O = Fe(II)-heme b-[protein] + nitrite + 2 H(+). Its function is as follows. Phytoglobin that reduces nitrite to nitric oxide (NO) under anoxic conditions (e.g. during flooding or in waterlogged soil) and upon root nodulation. Required for general plant development and during nodulation, especially for the onset of symbiosis. Monitors nitric oxide (NO) levels during early phase of the nitrogen-fixing symbiosis and buffers oxygen in functioning nodules. May not function as an oxygen storage or transport protein. Has an unusually high affinity for O(2) through a hexacoordinate heme iron because of a very low dissociation constant. In Lotus japonicus (Lotus corniculatus var. japonicus), this protein is Anaerobic nitrite reductase Glb1-1.